The sequence spans 83 residues: U25-theraphotoxin-Cg1b (83 aa).

The signal sequence occupies residues 1-23 (MRFHTLLFLSFLLLVSCALICTA). The propeptide occupies 24 to 48 (QHPGLEKSGMFHENVGKGQHIEEKR). 3 cysteine pairs are disulfide-bonded: Cys50–Cys66, Cys57–Cys71, and Cys65–Cys79.

This sequence belongs to the neurotoxin 07 (Beta/delta-agtx) family. 03 (aga-4) subfamily. JZTX sub-subfamily. As to expression, expressed by the venom gland.

It localises to the secreted. Probable ion channel inhibitor. In Chilobrachys guangxiensis (Chinese earth tiger tarantula), this protein is U25-theraphotoxin-Cg1b.